The following is a 452-amino-acid chain: Bifunctional protein GlmU (452 aa).

The pyrophosphorylase stretch occupies residues 1–232; it reads MTTRTSLTIV…EDEVRGINTK (232 aa). UDP-N-acetyl-alpha-D-glucosamine is bound by residues 11–14, Lys-25, Gln-78, and 83–84; these read LAAG and GT. Asp-108 contributes to the Mg(2+) binding site. UDP-N-acetyl-alpha-D-glucosamine-binding residues include Gly-144, Glu-158, Asn-173, and Asn-230. Residue Asn-230 participates in Mg(2+) binding. The tract at residues 233–253 is linker; it reads AQLAEAEAVMQTRLRQAAMTA. The segment at 254–452 is N-acetyltransferase; that stretch reads GVTLISPETI…SARARKPKTS (199 aa). UDP-N-acetyl-alpha-D-glucosamine is bound by residues Arg-319 and Lys-337. Catalysis depends on His-349, which acts as the Proton acceptor. Positions 352 and 363 each coordinate UDP-N-acetyl-alpha-D-glucosamine. Residues Ala-366, 372 to 373, Ser-391, Ser-409, and Arg-426 contribute to the acetyl-CoA site; that span reads NY.

In the N-terminal section; belongs to the N-acetylglucosamine-1-phosphate uridyltransferase family. This sequence in the C-terminal section; belongs to the transferase hexapeptide repeat family. As to quaternary structure, homotrimer. Mg(2+) serves as cofactor.

The protein localises to the cytoplasm. It catalyses the reaction alpha-D-glucosamine 1-phosphate + acetyl-CoA = N-acetyl-alpha-D-glucosamine 1-phosphate + CoA + H(+). The enzyme catalyses N-acetyl-alpha-D-glucosamine 1-phosphate + UTP + H(+) = UDP-N-acetyl-alpha-D-glucosamine + diphosphate. It participates in nucleotide-sugar biosynthesis; UDP-N-acetyl-alpha-D-glucosamine biosynthesis; N-acetyl-alpha-D-glucosamine 1-phosphate from alpha-D-glucosamine 6-phosphate (route II): step 2/2. It functions in the pathway nucleotide-sugar biosynthesis; UDP-N-acetyl-alpha-D-glucosamine biosynthesis; UDP-N-acetyl-alpha-D-glucosamine from N-acetyl-alpha-D-glucosamine 1-phosphate: step 1/1. Its pathway is bacterial outer membrane biogenesis; LPS lipid A biosynthesis. Functionally, catalyzes the last two sequential reactions in the de novo biosynthetic pathway for UDP-N-acetylglucosamine (UDP-GlcNAc). The C-terminal domain catalyzes the transfer of acetyl group from acetyl coenzyme A to glucosamine-1-phosphate (GlcN-1-P) to produce N-acetylglucosamine-1-phosphate (GlcNAc-1-P), which is converted into UDP-GlcNAc by the transfer of uridine 5-monophosphate (from uridine 5-triphosphate), a reaction catalyzed by the N-terminal domain. This is Bifunctional protein GlmU from Rhodopseudomonas palustris (strain BisB5).